The primary structure comprises 438 residues: Na(+)/H(+) antiporter NhaA (438 aa).

The next 11 helical transmembrane spans lie at 23-43, 62-82, 104-124, 133-153, 162-182, 185-205, 212-232, 302-322, 337-357, 372-392, and 410-430; these read FGGI…NSFL, FFIG…LFFL, SFPV…YFFL, GFGI…MLLG, VFLI…IALF, TNLK…LAVL, SLIP…QSGI, FLAP…NAGV, LGVI…ITFI, WWHI…SMFI, and IAIL…LFVL.

It belongs to the NhaA Na(+)/H(+) (TC 2.A.33) antiporter family.

It localises to the cell inner membrane. It catalyses the reaction Na(+)(in) + 2 H(+)(out) = Na(+)(out) + 2 H(+)(in). Its function is as follows. Na(+)/H(+) antiporter that extrudes sodium in exchange for external protons. This is Na(+)/H(+) antiporter NhaA from Helicobacter pylori (strain G27).